Here is a 75-residue protein sequence, read N- to C-terminus: Exodeoxyribonuclease 7 small subunit (75 aa).

Belongs to the XseB family. In terms of assembly, heterooligomer composed of large and small subunits.

It is found in the cytoplasm. It carries out the reaction Exonucleolytic cleavage in either 5'- to 3'- or 3'- to 5'-direction to yield nucleoside 5'-phosphates.. Its function is as follows. Bidirectionally degrades single-stranded DNA into large acid-insoluble oligonucleotides, which are then degraded further into small acid-soluble oligonucleotides. The polypeptide is Exodeoxyribonuclease 7 small subunit (Listeria monocytogenes serotype 4b (strain CLIP80459)).